Here is a 92-residue protein sequence, read N- to C-terminus: Probable Fe(2+)-trafficking protein (92 aa).

Belongs to the Fe(2+)-trafficking protein family.

Functionally, could be a mediator in iron transactions between iron acquisition and iron-requiring processes, such as synthesis and/or repair of Fe-S clusters in biosynthetic enzymes. The sequence is that of Probable Fe(2+)-trafficking protein from Shewanella piezotolerans (strain WP3 / JCM 13877).